We begin with the raw amino-acid sequence, 375 residues long: Growth/differentiation factor 8 (375 aa).

A signal peptide spans M1–L23. Residues D24 to R266 constitute a propeptide that is removed on maturation. A glycan (N-linked (GlcNAc...) asparagine) is linked at N71. 4 disulfides stabilise this stretch: C272/C282, C281/C340, C309/C372, and C313/C374.

This sequence belongs to the TGF-beta family. As to quaternary structure, homodimer; disulfide-linked.

It is found in the secreted. In terms of biological role, acts specifically as a negative regulator of skeletal muscle growth. This chain is Growth/differentiation factor 8 (MSTN), found in Coturnix coturnix (Common quail).